We begin with the raw amino-acid sequence, 139 residues long: D-ribose pyranase (139 aa).

The Proton donor role is filled by H20. Substrate contacts are provided by residues D28, H106, and 128 to 130; that span reads YAN.

It belongs to the RbsD / FucU family. RbsD subfamily. Homodecamer.

The protein resides in the cytoplasm. It carries out the reaction beta-D-ribopyranose = beta-D-ribofuranose. Its pathway is carbohydrate metabolism; D-ribose degradation; D-ribose 5-phosphate from beta-D-ribopyranose: step 1/2. Its function is as follows. Catalyzes the interconversion of beta-pyran and beta-furan forms of D-ribose. The protein is D-ribose pyranase of Escherichia coli (strain 55989 / EAEC).